The chain runs to 613 residues: MSETTLKITTGPLPGSRKIYVEGSRPDVRVAMREIDLTPGSGEAPVRVYDCSGPYTDPSMQVDITKGVPRLREQWILERGDVEHYEGRAHKPEDDGLKPGETIGVPVFDRAGAGLRPLRAKPGKAPTQLAYARAGIITPEMEYVAIRENMKRAEMKAAVVRDGEDFGADIPDEVTPEFVRAEIARGRAVLPANVNHPEAEPMIIGRNFLTKINANIGNSAVASSVDEEVEKMVWATRWGADTVMDLSTGRHIHATREWIIRNSPVPIGTVPIYQALEKVDGKAEDLTWEIFRDTLIEQAEQGVDYFTIHAGVLLRYIPLTAKRTTGIVSRGGSIMAKWCLAHHKENFLYTHFEEICELLKAYDVGFSLGDGLRPGSIADANDAAQFGELETLGELTHKAWAHDCQVIIEGPGHVPMHKIKKNVEKQIELCGEAPFYTLGPLVTDIAPGYDHITSAIGAAMIGWFGTAMLCYVTPKEHLGLPDKQDVREGVVTYKLAAHAADLAKGHPGAQVRDNALSRARFEFRWKDQFNLSLDPEKALAFHDQHLPAEGAKLAHFCSMCGPKFCSMKISQEVRDFAAAEQGMAEMSEKFVNDGAEIYHTEPAQAQQAKPAAE.

Residues N215, M244, Y273, H309, 329–331 (SRG), 370–373 (DGLR), and E409 each bind substrate. H413 contributes to the Zn(2+) binding site. Y436 lines the substrate pocket. Residue H477 participates in Zn(2+) binding. Positions 557, 560, and 565 each coordinate [4Fe-4S] cluster.

The protein belongs to the ThiC family. Homodimer. [4Fe-4S] cluster is required as a cofactor.

It carries out the reaction 5-amino-1-(5-phospho-beta-D-ribosyl)imidazole + S-adenosyl-L-methionine = 4-amino-2-methyl-5-(phosphooxymethyl)pyrimidine + CO + 5'-deoxyadenosine + formate + L-methionine + 3 H(+). It functions in the pathway cofactor biosynthesis; thiamine diphosphate biosynthesis. Functionally, catalyzes the synthesis of the hydroxymethylpyrimidine phosphate (HMP-P) moiety of thiamine from aminoimidazole ribotide (AIR) in a radical S-adenosyl-L-methionine (SAM)-dependent reaction. In Paramagnetospirillum magneticum (strain ATCC 700264 / AMB-1) (Magnetospirillum magneticum), this protein is Phosphomethylpyrimidine synthase.